Reading from the N-terminus, the 277-residue chain is Ribosomal RNA small subunit methyltransferase A (277 aa).

S-adenosyl-L-methionine is bound by residues Asn26, Leu28, Gly53, Glu74, Asp101, and Asn123.

It belongs to the class I-like SAM-binding methyltransferase superfamily. rRNA adenine N(6)-methyltransferase family. RsmA subfamily.

The protein resides in the cytoplasm. It catalyses the reaction adenosine(1518)/adenosine(1519) in 16S rRNA + 4 S-adenosyl-L-methionine = N(6)-dimethyladenosine(1518)/N(6)-dimethyladenosine(1519) in 16S rRNA + 4 S-adenosyl-L-homocysteine + 4 H(+). Functionally, specifically dimethylates two adjacent adenosines (A1518 and A1519) in the loop of a conserved hairpin near the 3'-end of 16S rRNA in the 30S particle. May play a critical role in biogenesis of 30S subunits. The protein is Ribosomal RNA small subunit methyltransferase A of Opitutus terrae (strain DSM 11246 / JCM 15787 / PB90-1).